The sequence spans 132 residues: Small ribosomal subunit protein uS8c (132 aa).

This sequence belongs to the universal ribosomal protein uS8 family. Part of the 30S ribosomal subunit.

Its subcellular location is the plastid. The protein localises to the chloroplast. In terms of biological role, one of the primary rRNA binding proteins, it binds directly to 16S rRNA central domain where it helps coordinate assembly of the platform of the 30S subunit. The polypeptide is Small ribosomal subunit protein uS8c (rps8) (Pinus thunbergii (Japanese black pine)).